The chain runs to 447 residues: MARLFGTDGVRGIANYDLTPQLAFELGRAGAYVLTHGTHRPKVVVGKDSRISGDMLECALTAGLTSVGAEVISVGIIPTPAVAYLTRLYQADAGVMISASHNPVEYNGIKFFDKDGYKLPDEVEDRIENIIKEKIELPSPIGTGIGTRKEYTNSHRDYIEFLKSTIDGDLKGMKIVIDCAYGASSTIAPILFKELGAEVILHGAEPIGEKINVNCGSTHPEKLQQLVIENGADIGLAFDGDADRLIAVDEKGNVVDGDHIMAICAIDLKKKGRLKNNTVVATVMSNIGFEIALKEQGINLIRTKVGDRYVLEEMTKGGYSIGGEQSGHIIFLDDNTTGDGEITALKLCSISKESGKKLSELAACMITYPQVLINAKVKNELKNAYLEDEEIKREIENLEREMRGEGRVLIRPSGTEPLVRVMVEGKDYDKISQMAKELAELIERKLN.

The active-site Phosphoserine intermediate is the Ser100. Residues Ser100, Asp239, Asp241, and Asp243 each coordinate Mg(2+). Ser100 is subject to Phosphoserine.

Belongs to the phosphohexose mutase family. Requires Mg(2+) as cofactor. In terms of processing, activated by phosphorylation.

It carries out the reaction alpha-D-glucosamine 1-phosphate = D-glucosamine 6-phosphate. Its function is as follows. Catalyzes the conversion of glucosamine-6-phosphate to glucosamine-1-phosphate. This is Phosphoglucosamine mutase from Thermoanaerobacter sp. (strain X514).